The primary structure comprises 494 residues: Myocyte-specific enhancer factor 2A (494 aa).

The 55-residue stretch at 3-57 (RKKIQITRIMDERNRQVTFTKRKFGLMKKAYELSVLCDCEIALIIFNSSNKLFQY) folds into the MADS-box domain. Positions 58–86 (ASTDMDKVLLKYTEYNEPHESRTNSDIVE) form a DNA-binding region, mef2-type. Ser-59 bears the Phosphoserine; by CK2 mark. A phosphoserine mark is found at Ser-98 and Ser-108. Residues 171 to 181 (TLTDSSMLSPP) show a composition bias toward low complexity. A disordered region spans residues 171–218 (TLTDSSMLSPPQTTLHRNVSPGAPQRPPSTGNAGGMLSTTDLIVPNGA). At Ser-233 the chain carries Phosphoserine. Residues 238 to 268 (GATGANSLGKVMPTKSPPPPGGGNLGMNSRK) are disordered. Lys-247 carries the N6-acetyllysine modification. The residue at position 253 (Ser-253) is a Phosphoserine. The required for interaction with MAPKs stretch occupies residues 264–281 (MNSRKPDLRVVIPPSSKG). Thr-302 and Thr-309 each carry phosphothreonine; by MAPK7 and MAPK14. Ser-345 is modified (phosphoserine; by MAPK7). Residues 380 to 392 (SNLSINTNQNINI) show a composition bias toward polar residues. A disordered region spans residues 380-494 (SNLSINTNQN…KRMRMDAWVT (115 aa)). Lys-393 is subject to N6-acetyllysine; alternate. Lys-393 participates in a covalent cross-link: Glycyl lysine isopeptide (Lys-Gly) (interchain with G-Cter in SUMO); alternate. Residue Ser-398 is modified to Phosphoserine; by CDK5. A Phosphothreonine modification is found at Thr-405. Residues 418-432 (QPPPPPPQPQPPQPQ) show a composition bias toward pro residues. Position 440 is a phosphoserine (Ser-440). Over residues 440 to 453 (SPVDSLSSSSSSYD) the composition is skewed to low complexity. 2 stretches are compositionally biased toward basic and acidic residues: residues 454 to 464 (GSDREDPRGDF) and 475 to 494 (NTEDRESPSVKRMRMDAWVT).

Binds DNA as a homo- or heterodimer. Dimerizes with MEF2D. Interacts with HDAC7. Interacts with PIAS1; the interaction enhances sumoylation. Interacts with HDAC4, HDAC9 and SLC2A4RG. Interacts (via the N-terminal) with MAPK7; the interaction results in the phosphorylation and transcriptional activity of MEF2A. Post-translationally, constitutive phosphorylation on Ser-398 promotes Lys-393 sumoylation thus preventing acetylation at this site. Dephosphorylation on Ser-398 by PPP3CA upon neuron depolarization promotes a switch from sumoylation to acetylation on residue Lys-393 leading to inhibition of dendrite claw differentiation. Phosphorylation on Thr-302 and Thr-309 are the main sites involved in p38 MAPK signaling and activate transcription. Phosphorylated on these sites by MAPK14/p38alpha and MAPK11/p38beta, but not by MAPK13/p38delta nor by MAPK12/p38gamma. Phosphorylation on Ser-398 by CDK5 induced by neurotoxicity inhibits MEF2A transcriptional activation leading to apoptosis of cortical neurons. Phosphorylation on Thr-302, Thr-309 and Ser-345 can be induced by EGF. Sumoylation on Lys-393 is enhanced by PIAS1 and represses transcriptional activity. Phosphorylation on Ser-398 is required for sumoylation. Has no effect on nuclear location nor on DNA binding. Sumoylated with SUMO1 and, to a lesser extent with SUMO2 and SUMO3. PIASx facilitates sumoylation in postsynaptic dendrites in the cerebellar cortex and promotes their morphogenesis. In terms of processing, acetylation on Lys-393 activates transcriptional activity. Acetylated by p300 on several sites in diffentiating myocytes. Acetylation on Lys-4 increases DNA binding and transactivation. Hyperacetylation by p300 leads to enhanced cardiac myocyte growth and heart failure. Post-translationally, proteolytically cleaved in cerebellar granule neurons on several sites by caspase 3 and caspase 7 following neurotoxicity. Preferentially cleaves the CDK5-mediated hyperphosphorylated form which leads to neuron apoptosis and transcriptional inactivation.

The protein localises to the nucleus. Its function is as follows. Transcriptional activator which binds specifically to the MEF2 element, 5'-YTA[AT](4)TAR-3', found in numerous muscle-specific genes. Also involved in the activation of numerous growth factor- and stress-induced genes. Mediates cellular functions not only in skeletal and cardiac muscle development, but also in neuronal differentiation and survival. Plays diverse roles in the control of cell growth, survival and apoptosis via p38 MAPK signaling in muscle-specific and/or growth factor-related transcription. In cerebellar granule neurons, phosphorylated and sumoylated MEF2A represses transcription of NUR77 promoting synaptic differentiation. Associates with chromatin to the ZNF16 promoter. This chain is Myocyte-specific enhancer factor 2A (MEF2A), found in Pongo abelii (Sumatran orangutan).